We begin with the raw amino-acid sequence, 222 residues long: Peptide methionine sulfoxide reductase MsrA 2 (222 aa).

Cys-56 is an active-site residue.

The protein belongs to the MsrA Met sulfoxide reductase family.

The enzyme catalyses L-methionyl-[protein] + [thioredoxin]-disulfide + H2O = L-methionyl-(S)-S-oxide-[protein] + [thioredoxin]-dithiol. It catalyses the reaction [thioredoxin]-disulfide + L-methionine + H2O = L-methionine (S)-S-oxide + [thioredoxin]-dithiol. Its function is as follows. Has an important function as a repair enzyme for proteins that have been inactivated by oxidation. Catalyzes the reversible oxidation-reduction of methionine sulfoxide in proteins to methionine. In Nostoc sp. (strain PCC 7120 / SAG 25.82 / UTEX 2576), this protein is Peptide methionine sulfoxide reductase MsrA 2 (msrA2).